The chain runs to 771 residues: Probable exo-1,4-beta-xylosidase bxlB (771 aa).

The first 25 residues, 1–25, serve as a signal peptide directing secretion; it reads MAHITSWHYGNAIALLVSLAPGALS. An N-linked (GlcNAc...) asparagine glycan is attached at Asn67. Residue Asp293 is part of the active site. Residues Asn305, Asn345, Asn423, and Asn464 are each glycosylated (N-linked (GlcNAc...) asparagine).

Belongs to the glycosyl hydrolase 3 family.

The protein localises to the secreted. The enzyme catalyses Hydrolysis of (1-&gt;4)-beta-D-xylans, to remove successive D-xylose residues from the non-reducing termini.. It functions in the pathway glycan degradation; xylan degradation. Xylan 1,4-beta-xylosidase involved in the hydrolysis of xylan, a major structural heterogeneous polysaccharide found in plant biomass representing the second most abundant polysaccharide in the biosphere, after cellulose. The chain is Probable exo-1,4-beta-xylosidase bxlB (bxlB) from Aspergillus fumigatus (strain CBS 144.89 / FGSC A1163 / CEA10) (Neosartorya fumigata).